A 166-amino-acid polypeptide reads, in one-letter code: Putative tRNA (cytidine(34)-2'-O)-methyltransferase (166 aa).

Positions 83, 109, 130, and 138 each coordinate S-adenosyl-L-methionine.

Belongs to the class IV-like SAM-binding methyltransferase superfamily. RNA methyltransferase TrmH family. TrmL subfamily.

The protein resides in the cytoplasm. The catalysed reaction is cytidine(34) in tRNA + S-adenosyl-L-methionine = 2'-O-methylcytidine(34) in tRNA + S-adenosyl-L-homocysteine + H(+). It catalyses the reaction 5-carboxymethylaminomethyluridine(34) in tRNA(Leu) + S-adenosyl-L-methionine = 5-carboxymethylaminomethyl-2'-O-methyluridine(34) in tRNA(Leu) + S-adenosyl-L-homocysteine + H(+). In terms of biological role, could methylate the ribose at the nucleotide 34 wobble position in tRNA. The chain is Putative tRNA (cytidine(34)-2'-O)-methyltransferase from Mycoplasma genitalium (strain ATCC 33530 / DSM 19775 / NCTC 10195 / G37) (Mycoplasmoides genitalium).